The sequence spans 338 residues: Ornithine carbamoyltransferase (338 aa).

Carbamoyl phosphate-binding positions include 56-59, Q83, R107, and 134-137; these read STRT and HPTQ. Residues N168, D232, and 236–237 contribute to the L-ornithine site; that span reads SM. Residues 274–275 and R320 contribute to the carbamoyl phosphate site; that span reads CL.

It belongs to the aspartate/ornithine carbamoyltransferase superfamily. OTCase family.

The protein resides in the cytoplasm. It catalyses the reaction carbamoyl phosphate + L-ornithine = L-citrulline + phosphate + H(+). Its pathway is amino-acid biosynthesis; L-arginine biosynthesis; L-arginine from L-ornithine and carbamoyl phosphate: step 1/3. Its function is as follows. Reversibly catalyzes the transfer of the carbamoyl group from carbamoyl phosphate (CP) to the N(epsilon) atom of ornithine (ORN) to produce L-citrulline. This Photorhabdus laumondii subsp. laumondii (strain DSM 15139 / CIP 105565 / TT01) (Photorhabdus luminescens subsp. laumondii) protein is Ornithine carbamoyltransferase.